The primary structure comprises 417 residues: Serine hydroxymethyltransferase (417 aa).

(6S)-5,6,7,8-tetrahydrofolate contacts are provided by residues Leu121 and 125 to 127; that span reads GHL. Lys229 carries the N6-(pyridoxal phosphate)lysine modification. 355–357 is a (6S)-5,6,7,8-tetrahydrofolate binding site; the sequence is SPF.

Belongs to the SHMT family. As to quaternary structure, homodimer. Pyridoxal 5'-phosphate is required as a cofactor.

The protein localises to the cytoplasm. It carries out the reaction (6R)-5,10-methylene-5,6,7,8-tetrahydrofolate + glycine + H2O = (6S)-5,6,7,8-tetrahydrofolate + L-serine. It functions in the pathway one-carbon metabolism; tetrahydrofolate interconversion. The protein operates within amino-acid biosynthesis; glycine biosynthesis; glycine from L-serine: step 1/1. In terms of biological role, catalyzes the reversible interconversion of serine and glycine with tetrahydrofolate (THF) serving as the one-carbon carrier. This reaction serves as the major source of one-carbon groups required for the biosynthesis of purines, thymidylate, methionine, and other important biomolecules. Also exhibits THF-independent aldolase activity toward beta-hydroxyamino acids, producing glycine and aldehydes, via a retro-aldol mechanism. The sequence is that of Serine hydroxymethyltransferase from Salmonella schwarzengrund (strain CVM19633).